The sequence spans 184 residues: Photosystem I assembly protein Ycf4 (184 aa).

A run of 2 helical transmembrane segments spans residues 22-42 (FCWAFILFLGSLGFLLVGTSS) and 57-77 (IIFFPQGIVMSFYGIAGLFIS).

It belongs to the Ycf4 family.

Its subcellular location is the plastid. The protein localises to the chloroplast thylakoid membrane. Seems to be required for the assembly of the photosystem I complex. This chain is Photosystem I assembly protein Ycf4, found in Crucihimalaya wallichii (Rock-cress).